A 579-amino-acid polypeptide reads, in one-letter code: uncharacterized protein (579 aa).

Residues 449–577 (QKGVFILVDI…GKNRLMIHDS (129 aa)) form the GGDEF domain.

This is an uncharacterized protein from Bacillus subtilis (strain 168).